Consider the following 185-residue polypeptide: CASP-like protein 2C2 (185 aa).

Residues 1–22 (MAAAARVSEVKAEGLLRGACTA) lie on the Cytoplasmic side of the membrane. A helical transmembrane segment spans residues 23–43 (LAAAAALLVGLSTQTETVLLV). Residues 44–53 (RKKATVKDVQ) lie on the Extracellular side of the membrane. Residues 54 to 74 (ALWVLAMAAAAAAGYHLLQLL) traverse the membrane as a helical segment. The Cytoplasmic portion of the chain corresponds to 75-104 (KCLYLGRVGGARPCRRSSRALAWTCLLLDK). Residues 105–125 (ACAYTTFATTVAAAQACVVAL) form a helical membrane-spanning segment. The Extracellular segment spans residues 126–146 (DGAHALQWTKLCNIYTRFCEQ). A helical membrane pass occupies residues 147-167 (VAGSLVLGMLAAVGTAVLSAA). The Cytoplasmic portion of the chain corresponds to 168-185 (SARNVFRHYASLETYAAH).

The protein belongs to the Casparian strip membrane proteins (CASP) family. As to quaternary structure, homodimer and heterodimers.

Its subcellular location is the cell membrane. This Zea mays (Maize) protein is CASP-like protein 2C2.